The chain runs to 455 residues: Ribulose bisphosphate carboxylase large chain (455 aa).

Lys5 is modified (N6,N6,N6-trimethyllysine). 2 residues coordinate substrate: Asn114 and Thr164. Lys166 (proton acceptor) is an active-site residue. Position 168 (Lys168) interacts with substrate. 3 residues coordinate Mg(2+): Lys192, Asp194, and Glu195. Residue Lys192 is modified to N6-carboxylysine. The active-site Proton acceptor is His285. Substrate contacts are provided by Arg286, His318, and Ser370.

This sequence belongs to the RuBisCO large chain family. Type I subfamily. As to quaternary structure, heterohexadecamer of 8 large chains and 8 small chains; disulfide-linked. The disulfide link is formed within the large subunit homodimers. Mg(2+) serves as cofactor. Post-translationally, the disulfide bond which can form in the large chain dimeric partners within the hexadecamer appears to be associated with oxidative stress and protein turnover.

The protein localises to the plastid. It is found in the chloroplast. The catalysed reaction is 2 (2R)-3-phosphoglycerate + 2 H(+) = D-ribulose 1,5-bisphosphate + CO2 + H2O. The enzyme catalyses D-ribulose 1,5-bisphosphate + O2 = 2-phosphoglycolate + (2R)-3-phosphoglycerate + 2 H(+). RuBisCO catalyzes two reactions: the carboxylation of D-ribulose 1,5-bisphosphate, the primary event in carbon dioxide fixation, as well as the oxidative fragmentation of the pentose substrate in the photorespiration process. Both reactions occur simultaneously and in competition at the same active site. The sequence is that of Ribulose bisphosphate carboxylase large chain from Lupinus nanus (Sky lupine).